Reading from the N-terminus, the 226-residue chain is Leucyl/phenylalanyl-tRNA--protein transferase (226 aa).

This sequence belongs to the L/F-transferase family.

It is found in the cytoplasm. It carries out the reaction N-terminal L-lysyl-[protein] + L-leucyl-tRNA(Leu) = N-terminal L-leucyl-L-lysyl-[protein] + tRNA(Leu) + H(+). It catalyses the reaction N-terminal L-arginyl-[protein] + L-leucyl-tRNA(Leu) = N-terminal L-leucyl-L-arginyl-[protein] + tRNA(Leu) + H(+). The enzyme catalyses L-phenylalanyl-tRNA(Phe) + an N-terminal L-alpha-aminoacyl-[protein] = an N-terminal L-phenylalanyl-L-alpha-aminoacyl-[protein] + tRNA(Phe). Functions in the N-end rule pathway of protein degradation where it conjugates Leu, Phe and, less efficiently, Met from aminoacyl-tRNAs to the N-termini of proteins containing an N-terminal arginine or lysine. This is Leucyl/phenylalanyl-tRNA--protein transferase from Bradyrhizobium diazoefficiens (strain JCM 10833 / BCRC 13528 / IAM 13628 / NBRC 14792 / USDA 110).